Consider the following 211-residue polypeptide: FMN-dependent NADH:quinone oxidoreductase 2 (211 aa).

Residues Ser-10 and 17-19 (SRS) contribute to the FMN site.

It belongs to the azoreductase type 1 family. Homodimer. It depends on FMN as a cofactor.

It carries out the reaction 2 a quinone + NADH + H(+) = 2 a 1,4-benzosemiquinone + NAD(+). The enzyme catalyses N,N-dimethyl-1,4-phenylenediamine + anthranilate + 2 NAD(+) = 2-(4-dimethylaminophenyl)diazenylbenzoate + 2 NADH + 2 H(+). Quinone reductase that provides resistance to thiol-specific stress caused by electrophilic quinones. Functionally, also exhibits azoreductase activity. Catalyzes the reductive cleavage of the azo bond in aromatic azo compounds to the corresponding amines. This Listeria innocua serovar 6a (strain ATCC BAA-680 / CLIP 11262) protein is FMN-dependent NADH:quinone oxidoreductase 2.